The following is a 314-amino-acid chain: Olfactory receptor 52K2 (314 aa).

Topologically, residues 1–27 (MSASNITLTHPTAFLLVGIPGLEHLHI) are extracellular. N-linked (GlcNAc...) asparagine glycosylation is present at Asn5. A helical transmembrane segment spans residues 28 to 48 (WISIPFCLAYTLALLGNCTLL). Topologically, residues 49–56 (LIIQADAA) are cytoplasmic. The helical transmembrane segment at 57–77 (LHEPMYLFLAMLAAIDLVLSS) threads the bilayer. The Extracellular portion of the chain corresponds to 78–101 (SALPKMLAIFWFRDREINFFACLA). A disulfide bridge connects residues Cys99 and Cys191. Residues 102-122 (QMFFLHSFSIMESAVLLAMAF) traverse the membrane as a helical segment. The Cytoplasmic segment spans residues 123–141 (DRYVAICKPLHYTKVLTGS). The chain crosses the membrane as a helical span at residues 142–162 (LITKIGMAAVARAVTLMTPLP). At 163-198 (FLLRCFHYCRGPVIAHCYCEHMAVVRLACGDTSFNN) the chain is on the extracellular side. The chain crosses the membrane as a helical span at residues 199–219 (IYGIAVAMFIVVLDLLLVILS). Over 220 to 239 (YIFILQAVLLLASQEARYKA) the chain is Cytoplasmic. A helical transmembrane segment spans residues 240–260 (FGTCVSHIGAILAFYTTVVIS). At 261-275 (SVMHRVARHAAPHVH) the chain is on the extracellular side. The chain crosses the membrane as a helical span at residues 276 to 296 (ILLANFYLLFPPMVNPIIYGV). At 297–314 (KTKQIRESILGVFPRKDM) the chain is on the cytoplasmic side.

It belongs to the G-protein coupled receptor 1 family.

The protein resides in the cell membrane. Functionally, odorant receptor. This Homo sapiens (Human) protein is Olfactory receptor 52K2 (OR52K2).